Reading from the N-terminus, the 431-residue chain is Histidine--tRNA ligase (431 aa).

Belongs to the class-II aminoacyl-tRNA synthetase family. Homodimer.

It is found in the cytoplasm. It catalyses the reaction tRNA(His) + L-histidine + ATP = L-histidyl-tRNA(His) + AMP + diphosphate + H(+). This is Histidine--tRNA ligase from Neisseria meningitidis serogroup B (strain ATCC BAA-335 / MC58).